We begin with the raw amino-acid sequence, 116 residues long: Large ribosomal subunit protein bL17 (116 aa).

It belongs to the bacterial ribosomal protein bL17 family. As to quaternary structure, part of the 50S ribosomal subunit. Contacts protein L32.

This chain is Large ribosomal subunit protein bL17, found in Deinococcus geothermalis (strain DSM 11300 / CIP 105573 / AG-3a).